The chain runs to 51 residues: Large ribosomal subunit protein eL39 (51 aa).

It belongs to the eukaryotic ribosomal protein eL39 family. As to quaternary structure, interacts with YIH1.

The chain is Large ribosomal subunit protein eL39 (RPL39) from Kluyveromyces marxianus (Yeast).